The primary structure comprises 141 residues: Lutropin subunit beta (141 aa).

The signal sequence occupies residues 1–20 (MEMFQGLLLWLLLGVAGVWA). Intrachain disulfides connect Cys-29–Cys-77, Cys-43–Cys-92, Cys-46–Cys-130, Cys-54–Cys-108, Cys-58–Cys-110, and Cys-113–Cys-120. A glycan (N-linked (GlcNAc...) asparagine) is linked at Asn-33.

The protein belongs to the glycoprotein hormones subunit beta family. As to quaternary structure, heterodimer of a common alpha chain and a unique beta chain which confers biological specificity to thyrotropin, lutropin, follitropin and gonadotropin.

It is found in the secreted. Functionally, promotes spermatogenesis and ovulation by stimulating the testes and ovaries to synthesize steroids. The protein is Lutropin subunit beta (LHB) of Bos taurus (Bovine).